We begin with the raw amino-acid sequence, 172 residues long: Ribosome maturation factor RimM (172 aa).

Residues 96–168 (DGEFYYHEII…RIEVELMEGL (73 aa)) enclose the PRC barrel domain.

It belongs to the RimM family. In terms of assembly, binds ribosomal protein uS19.

The protein localises to the cytoplasm. An accessory protein needed during the final step in the assembly of 30S ribosomal subunit, possibly for assembly of the head region. Essential for efficient processing of 16S rRNA. May be needed both before and after RbfA during the maturation of 16S rRNA. It has affinity for free ribosomal 30S subunits but not for 70S ribosomes. The sequence is that of Ribosome maturation factor RimM from Streptococcus thermophilus (strain CNRZ 1066).